The sequence spans 244 residues: High affinity immunoglobulin epsilon receptor subunit beta (244 aa).

Over 1–59 (MDTESNRRANLALPQEPSSVPAFEVLEISPQEVSSGRLLKSASSPPLHTWLTVLKKEQE) the chain is Cytoplasmic. Residues 60–79 (FLGVTQILTAMICLCFGTVV) traverse the membrane as a helical segment. At 80–97 (CSVLDISHIEGDIFSSFK) the chain is on the extracellular side. The chain crosses the membrane as a helical span at residues 98–117 (AGYPFWGAIFFSISGMLSII). Residues 118-130 (SERRNATYLVRGS) are Cytoplasmic-facing. Residues 131–150 (LGANTASSIAGGTGITILII) form a helical membrane-spanning segment. Topologically, residues 151 to 180 (NLKKSLAYIHIHSCQKFFETKCFMASFSTE) are extracellular. A helical transmembrane segment spans residues 181-200 (IVVMMLFLTILGLGSAVSLT). Over 201-244 (ICGAGEELKGNKVPEDRVYEELNIYSATYSELEDPGEMSPPIDL) the chain is Cytoplasmic. Phosphotyrosine is present on residues Tyr219 and Tyr225. The residue at position 226 (Ser226) is a Phosphoserine. Position 229 is a phosphotyrosine (Tyr229).

The protein belongs to the MS4A family. Tetramer of an alpha chain, a beta chain, and two disulfide linked gamma chains. Binds LILRB1. Interacts with FGR, FES/FPS and LYN. Phosphorylated on tyrosine residues by LYN. Found on the surface of mast cells and basophils.

It localises to the membrane. Its function is as follows. High affinity receptor that binds to the Fc region of immunoglobulins epsilon. Aggregation of FCER1 by multivalent antigens is required for the full mast cell response, including the release of preformed mediators (such as histamine) by degranulation and de novo production of lipid mediators and cytokines. Also mediates the secretion of important lymphokines. Binding of allergen to receptor-bound IgE leads to cell activation and the release of mediators responsible for the manifestations of allergy. The polypeptide is High affinity immunoglobulin epsilon receptor subunit beta (MS4A2) (Homo sapiens (Human)).